A 672-amino-acid chain; its full sequence is Poly-beta-1,6-N-acetyl-D-glucosamine N-deacetylase (672 aa).

A signal peptide spans 1–20 (MLRNGNKYLLMLVSIIMLTA). Residue cysteine 21 is the site of N-palmitoyl cysteine attachment. A lipid anchor (S-diacylglycerol cysteine) is attached at cysteine 21. One can recognise a NodB homology domain in the interval 107–349 (KAVVLTFDDG…IQRVKDMQIS (243 aa)).

It belongs to the polysaccharide deacetylase family.

Its subcellular location is the cell outer membrane. In terms of biological role, catalyzes the N-deacetylation of poly-beta-1,6-N-acetyl-D-glucosamine (PGA), a biofilm adhesin polysaccharide. N-deacetylation promotes PGA export through the PgaA porin. This chain is Poly-beta-1,6-N-acetyl-D-glucosamine N-deacetylase (pgaB), found in Escherichia coli (strain K12).